Here is a 319-residue protein sequence, read N- to C-terminus: ADP-ribosyl cyclase/cyclic ADP-ribose hydrolase 2 (319 aa).

An N-terminal signal peptide occupies residues 1–33 (MAVQACALSLRLGLWMSLLLPVLPGAGARAAGA). Cystine bridges form between Cys52–Cys68, Cys84–Cys164, and Cys145–Cys158. 2 N-linked (GlcNAc...) asparagine glycosylation sites follow: Asn67 and Asn96. Trp110 is an NAD(+) binding site. Residue Trp110 coordinates nicotinamide. An N-linked (GlcNAc...) asparagine glycan is attached at Asn149. Trp173 lines the NAD(+) pocket. Residue Asn193 is glycosylated (N-linked (GlcNAc...) asparagine). Residue Glu211 participates in NAD(+) binding. 2 disulfides stabilise this stretch: Cys239–Cys260 and Cys272–Cys281. Ser294 carries the GPI-anchor amidated serine lipid modification. A propeptide spanning residues 295–319 (PALHAIGDISLIISLLVALASSSQA) is cleaved from the precursor.

This sequence belongs to the ADP-ribosyl cyclase family. As to quaternary structure, homodimer. In terms of tissue distribution, pancreatic islets, kidney, spleen, heart, thymus, intestine and salivary gland.

The protein resides in the cell membrane. It catalyses the reaction NAD(+) + H2O = ADP-D-ribose + nicotinamide + H(+). The catalysed reaction is NAD(+) = cyclic ADP-beta-D-ribose + nicotinamide + H(+). It carries out the reaction cyclic ADP-beta-D-ribose + H2O = ADP-D-ribose. Its function is as follows. Catalyzes both the synthesis of cyclic ADP-beta-D-ribose (cADPR) from NAD(+), and its hydrolysis to ADP-D-ribose (ADPR). Cyclic ADPR is known to serve as an endogenous second messenger that elicits calcium release from intracellular stores, and thus regulates the mobilization of intracellular calcium. May be involved in pre-B-cell growth. The chain is ADP-ribosyl cyclase/cyclic ADP-ribose hydrolase 2 (Bst1) from Rattus norvegicus (Rat).